The sequence spans 76 residues: Omega-conotoxin-like TxO5 (76 aa).

A signal peptide spans 1–22; the sequence is MKLTCMVIVAVLFLTAWTFVTA. A propeptide spanning residues 23 to 50 is cleaved from the precursor; the sequence is ITSNGLENLFPNAHHEMKNPEASKLNKR. Cystine bridges form between Cys-51-Cys-66, Cys-58-Cys-70, and Cys-65-Cys-75.

Belongs to the conotoxin O1 superfamily. In terms of tissue distribution, expressed by the venom duct.

It localises to the secreted. Omega-conotoxins act at presynaptic membranes, they bind and block voltage-gated calcium channels (Cav). This Conus textile (Cloth-of-gold cone) protein is Omega-conotoxin-like TxO5 (TXO5).